The primary structure comprises 156 residues: Small ribosomal subunit protein uS7 (156 aa).

Belongs to the universal ribosomal protein uS7 family. Part of the 30S ribosomal subunit. Contacts proteins S9 and S11.

Its function is as follows. One of the primary rRNA binding proteins, it binds directly to 16S rRNA where it nucleates assembly of the head domain of the 30S subunit. Is located at the subunit interface close to the decoding center, probably blocks exit of the E-site tRNA. The chain is Small ribosomal subunit protein uS7 from Geobacillus kaustophilus (strain HTA426).